Here is a 207-residue protein sequence, read N- to C-terminus: Large ribosomal subunit protein uL4 (207 aa).

The interval 48–75 (THSVKNRSAVRGGGRKPWRQKGTGRARQ) is disordered. Residues 60–71 (GGRKPWRQKGTG) are compositionally biased toward basic residues.

The protein belongs to the universal ribosomal protein uL4 family. Part of the 50S ribosomal subunit.

One of the primary rRNA binding proteins, this protein initially binds near the 5'-end of the 23S rRNA. It is important during the early stages of 50S assembly. It makes multiple contacts with different domains of the 23S rRNA in the assembled 50S subunit and ribosome. Its function is as follows. Forms part of the polypeptide exit tunnel. This is Large ribosomal subunit protein uL4 from Staphylococcus carnosus (strain TM300).